The sequence spans 154 residues: Xanthine-guanine phosphoribosyltransferase (154 aa).

5-phospho-alpha-D-ribose 1-diphosphate contacts are provided by residues 37–38 (RG), arginine 69, and 88–96 (DDLVDSGDT). Arginine 69 contacts GMP. Aspartate 89 contacts Mg(2+). The guanine site is built by aspartate 92 and isoleucine 135. Xanthine contacts are provided by aspartate 92 and isoleucine 135. Residues 92–96 (DSGDT) and 134–135 (WI) contribute to the GMP site.

This sequence belongs to the purine/pyrimidine phosphoribosyltransferase family. XGPT subfamily. Homotetramer. It depends on Mg(2+) as a cofactor.

The protein resides in the cell inner membrane. It carries out the reaction GMP + diphosphate = guanine + 5-phospho-alpha-D-ribose 1-diphosphate. The catalysed reaction is XMP + diphosphate = xanthine + 5-phospho-alpha-D-ribose 1-diphosphate. It catalyses the reaction IMP + diphosphate = hypoxanthine + 5-phospho-alpha-D-ribose 1-diphosphate. It participates in purine metabolism; GMP biosynthesis via salvage pathway; GMP from guanine: step 1/1. Its pathway is purine metabolism; XMP biosynthesis via salvage pathway; XMP from xanthine: step 1/1. Its function is as follows. Purine salvage pathway enzyme that catalyzes the transfer of the ribosyl-5-phosphate group from 5-phospho-alpha-D-ribose 1-diphosphate (PRPP) to the N9 position of the 6-oxopurines guanine and xanthine to form the corresponding ribonucleotides GMP (guanosine 5'-monophosphate) and XMP (xanthosine 5'-monophosphate), with the release of PPi. To a lesser extent, also acts on hypoxanthine. The chain is Xanthine-guanine phosphoribosyltransferase from Vibrio cholerae serotype O1 (strain ATCC 39541 / Classical Ogawa 395 / O395).